A 467-amino-acid polypeptide reads, in one-letter code: Constitutive acid phosphatase (467 aa).

The N-terminal stretch at 1-17 (MFKSVVYSVLAAALVNA) is a signal peptide. Histidine 75 functions as the Nucleophile in the catalytic mechanism. N-linked (GlcNAc...) asparagine glycosylation is found at asparagine 97, asparagine 103, asparagine 162, asparagine 192, asparagine 250, and asparagine 315. The active-site Proton donor is aspartate 338. Asparagine 356, asparagine 390, asparagine 439, asparagine 445, asparagine 456, and asparagine 461 each carry an N-linked (GlcNAc...) asparagine glycan.

This sequence belongs to the histidine acid phosphatase family.

It carries out the reaction a phosphate monoester + H2O = an alcohol + phosphate. In Saccharomyces cerevisiae (strain ATCC 204508 / S288c) (Baker's yeast), this protein is Constitutive acid phosphatase (PHO3).